We begin with the raw amino-acid sequence, 367 residues long: Female-specific protein transformer (367 aa).

A disordered region spans residues Glu-86–Ser-280. Over residues Val-109–Asn-129 the composition is skewed to polar residues. Over residues Pro-130–His-144 the composition is skewed to basic and acidic residues. The span at Asn-195 to Ser-223 shows a compositional bias: basic residues. The span at Thr-229–Arg-238 shows a compositional bias: basic and acidic residues. A compositionally biased stretch (basic residues) spans Thr-239 to Ser-257.

Its function is as follows. Sex differentiation protein controlling female somatic sexual differentiation. May act by promoting the formation of a splicing enhancer complex. The sequence is that of Female-specific protein transformer from Musca domestica (House fly).